The primary structure comprises 217 residues: Large ribosomal subunit protein uL1 (217 aa).

Position 2 is an N-acetylserine (Ser2). Tyr11 is subject to Phosphotyrosine. N6-acetyllysine is present on residues Lys91 and Lys106. At Lys118 the chain carries N6-acetyllysine; alternate. Lys118 is covalently cross-linked (Glycyl lysine isopeptide (Lys-Gly) (interchain with G-Cter in SUMO1); alternate). Lys118 is covalently cross-linked (Glycyl lysine isopeptide (Lys-Gly) (interchain with G-Cter in SUMO2); alternate). A Glycyl lysine isopeptide (Lys-Gly) (interchain with G-Cter in SUMO2) cross-link involves residue Lys161.

It belongs to the universal ribosomal protein uL1 family. In terms of assembly, component of the large ribosomal subunit.

Its subcellular location is the cytoplasm. Component of the large ribosomal subunit. The ribosome is a large ribonucleoprotein complex responsible for the synthesis of proteins in the cell. This chain is Large ribosomal subunit protein uL1 (RPL10A), found in Bos taurus (Bovine).